Consider the following 871-residue polypeptide: Protein translocase subunit SecA (871 aa).

ATP contacts are provided by residues glutamine 80, 98 to 102 (GEGKT), and aspartate 537.

It belongs to the SecA family. In terms of assembly, monomer and homodimer. Part of the essential Sec protein translocation apparatus which comprises SecA, SecYEG and auxiliary proteins SecDF. Other proteins may also be involved. A single SecA monomer interacts with SecY in the channel.

It is found in the cell inner membrane. The protein resides in the cytoplasm. It carries out the reaction ATP + H2O + cellular proteinSide 1 = ADP + phosphate + cellular proteinSide 2.. Functionally, part of the Sec protein translocase complex. Interacts with the SecYEG preprotein conducting channel. Has a central role in coupling the hydrolysis of ATP to the transfer of proteins into and across the cell membrane, serving as an ATP-driven molecular motor driving the stepwise translocation of polypeptide chains across the membrane. This chain is Protein translocase subunit SecA, found in Thermotoga maritima (strain ATCC 43589 / DSM 3109 / JCM 10099 / NBRC 100826 / MSB8).